We begin with the raw amino-acid sequence, 1587 residues long: Pentafunctional AROM polypeptide (1587 aa).

Residues 1–384 (MIEPTKISIL…YEPRASVVAN (384 aa)) are 3-dehydroquinate synthase. NAD(+)-binding positions include 44 to 46 (DTN), 81 to 84 (EVSK), 114 to 116 (GGV), and Asp-119. Arg-130 serves as a coordination point for 7-phospho-2-dehydro-3-deoxy-D-arabino-heptonate. Position 139 to 140 (139 to 140 (TT)) interacts with NAD(+). The 7-phospho-2-dehydro-3-deoxy-D-arabino-heptonate site is built by Asp-146 and Lys-152. Residue Lys-161 participates in NAD(+) binding. Asn-162 is a binding site for 7-phospho-2-dehydro-3-deoxy-D-arabino-heptonate. NAD(+)-binding positions include 179 to 182 (FLET) and Asn-190. Residue Glu-194 coordinates Zn(2+). 7-phospho-2-dehydro-3-deoxy-D-arabino-heptonate-binding positions include 194 to 197 (EVIK) and Lys-250. Glu-260 functions as the Proton acceptor; for 3-dehydroquinate synthase activity in the catalytic mechanism. 7-phospho-2-dehydro-3-deoxy-D-arabino-heptonate-binding positions include 264–268 (RNLLN) and His-271. Position 271 (His-271) interacts with Zn(2+). Catalysis depends on His-275, which acts as the Proton acceptor; for 3-dehydroquinate synthase activity. His-287 and Lys-356 together coordinate 7-phospho-2-dehydro-3-deoxy-D-arabino-heptonate. Position 287 (His-287) interacts with Zn(2+). Residues 397-842 (VFPGVSPKST…WDTLRLKFAV (446 aa)) form an EPSP synthase region. Cys-824 functions as the For EPSP synthase activity in the catalytic mechanism. Residues 864 to 1055 (SASVFIIGMR…KKKQHSFFVS (192 aa)) are shikimate kinase. 871–878 (GMRGAGKT) serves as a coordination point for ATP. The segment at 1056–1276 (LTLPDLRPAG…AAPGQLSATE (221 aa)) is 3-dehydroquinase. The active-site Proton acceptor; for 3-dehydroquinate dehydratase activity is the His-1179. Catalysis depends on Lys-1207, which acts as the Schiff-base intermediate with substrate; for 3-dehydroquinate dehydratase activity. Positions 1289–1587 (KKRFALFGTP…RDAVLGTKAD (299 aa)) are shikimate dehydrogenase.

This sequence in the N-terminal section; belongs to the sugar phosphate cyclases superfamily. Dehydroquinate synthase family. The protein in the 2nd section; belongs to the EPSP synthase family. It in the 3rd section; belongs to the shikimate kinase family. In the 4th section; belongs to the type-I 3-dehydroquinase family. This sequence in the C-terminal section; belongs to the shikimate dehydrogenase family. Homodimer. It depends on Zn(2+) as a cofactor.

It localises to the cytoplasm. It catalyses the reaction 7-phospho-2-dehydro-3-deoxy-D-arabino-heptonate = 3-dehydroquinate + phosphate. The catalysed reaction is 3-dehydroquinate = 3-dehydroshikimate + H2O. It carries out the reaction shikimate + NADP(+) = 3-dehydroshikimate + NADPH + H(+). The enzyme catalyses shikimate + ATP = 3-phosphoshikimate + ADP + H(+). It catalyses the reaction 3-phosphoshikimate + phosphoenolpyruvate = 5-O-(1-carboxyvinyl)-3-phosphoshikimate + phosphate. The protein operates within metabolic intermediate biosynthesis; chorismate biosynthesis; chorismate from D-erythrose 4-phosphate and phosphoenolpyruvate: step 2/7. It functions in the pathway metabolic intermediate biosynthesis; chorismate biosynthesis; chorismate from D-erythrose 4-phosphate and phosphoenolpyruvate: step 3/7. It participates in metabolic intermediate biosynthesis; chorismate biosynthesis; chorismate from D-erythrose 4-phosphate and phosphoenolpyruvate: step 4/7. Its pathway is metabolic intermediate biosynthesis; chorismate biosynthesis; chorismate from D-erythrose 4-phosphate and phosphoenolpyruvate: step 5/7. The protein operates within metabolic intermediate biosynthesis; chorismate biosynthesis; chorismate from D-erythrose 4-phosphate and phosphoenolpyruvate: step 6/7. Functionally, the AROM polypeptide catalyzes 5 consecutive enzymatic reactions in prechorismate polyaromatic amino acid biosynthesis. This is Pentafunctional AROM polypeptide from Aspergillus clavatus (strain ATCC 1007 / CBS 513.65 / DSM 816 / NCTC 3887 / NRRL 1 / QM 1276 / 107).